Consider the following 361-residue polypeptide: Single-stranded DNA-binding protein 3 (361 aa).

The residue at position 1 (methionine 1) is an N-acetylmethionine. A LisH domain is found at 16–48; it reads AREKLALYVYEYLLHVGAQKSAQTFLSEIRWEK. Asymmetric dimethylarginine is present on residues arginine 128, arginine 134, and arginine 138. Disordered stretches follow at residues 140–166 and 184–361; these read GNQP…QQGH and PMGP…TMSV. The segment covering 223–241 has biased composition (low complexity); that stretch reads PNSANSIPYSSSSPGTYVG. The span at 245-255 shows a compositional bias: pro residues; the sequence is GGGPPGTPIMP. The segment covering 258-269 has biased composition (polar residues); sequence ADSTNSSDNIYT. Positions 288–298 are enriched in gly residues; it reads GSDGPMGGMGG. Over residues 319 to 330 the composition is skewed to low complexity; the sequence is NSPNNISGISNP. Residues serine 320, serine 325, and serine 328 each carry the phosphoserine modification. Threonine 333 is subject to Phosphothreonine. Residues 346 to 361 show a composition bias toward polar residues; the sequence is HSFQNDNYSPSMTMSV. A phosphoserine mark is found at serine 354 and serine 360.

It localises to the nucleus. Functionally, may be involved in transcription regulation of the alpha 2(I) collagen gene where it binds to the single-stranded polypyrimidine sequences in the promoter region. The chain is Single-stranded DNA-binding protein 3 (Ssbp3) from Rattus norvegicus (Rat).